Reading from the N-terminus, the 706-residue chain is Protein argonaute (706 aa).

The interval 1 to 108 (MGKEALLNLY…ELFRDFLTKT (108 aa)) is N-terminal domain. A linker L1 region spans residues 109 to 165 (KVKDKFISDFYKKFRDKITVQGKNRKIALIPEVNEKVLKSEEGYFLLHLDLKFRIQP). A PAZ domain is found at 168–259 (TLQTLLERND…YPATILKPVL (92 aa)). Positions 263 to 334 (NLEDEERNEV…AKGKNTKVIT (72 aa)) are linker L2. The mid domain stretch occupies residues 335-448 (NLRKFLELCR…YDFVKRELLK (114 aa)). The Piwi domain occupies 419-694 (LVIVFLEEYP…ITKLMLRGIE (276 aa)). Residues 449 to 706 (KMIPSQVILN…KKEGDIMYWL (258 aa)) form a PIWI domain region. Residues aspartate 502, glutamate 541, and aspartate 571 contribute to the active site. Aspartate 502 is a binding site for Mn(2+). A Mn(2+)-binding site is contributed by aspartate 571. The segment at 612 to 650 (FIKGYFYKLSEDSVILATYNQVYEGTHQPIKVRKVYGEL) is PIWI box. Residue aspartate 683 is part of the active site. Aspartate 683 is a binding site for Mn(2+).

This sequence belongs to the argonaute family. Long pAgo subfamily. Mg(2+) is required as a cofactor.

In terms of biological role, a DNA-guided RNA endonuclease. Uses short ssDNA sequences as guides (gDNA) to bind complementary target strands, resulting in cleavage of the target RNA. The cleavage site is 10 nucleotides downstream of the residue base paired with the 5'-end of the gDNA. Binds ssDNA better than ssRNA, binds dsDNA and DNA-RNA hybrids but does not bind dsRNA. A 2 nucleotide 3'-overhang (possibly on the guide strand) may help load nucleic acids into the complex. In Aquifex aeolicus (strain VF5), this protein is Protein argonaute.